The primary structure comprises 602 residues: Major facilitator superfamily multidrug transporter mfsB (602 aa).

Helical transmembrane passes span 29–49 (FVLA…FPYV), 67–87 (LYAG…GMFW), 98–118 (PVLI…GFAP), 128–148 (ALGG…AEIV), 160–180 (IMPF…GALA), 201–221 (FLLP…VGFL), 329–349 (IVAY…IPVF), 378–398 (FMLA…FPFV), 411–431 (VLLV…LPSI), 439–459 (LALI…AILL), 468–486 (VLGS…SRAL), and 505–525 (IIAW…SFWM). The interval 527-602 (ESEPRRDSEK…RSNPLAFAED (76 aa)) is disordered. Basic and acidic residues predominate over residues 528-538 (SEPRRDSEKAG).

It belongs to the major facilitator superfamily.

The protein localises to the membrane. In terms of biological role, major facilitator superfamily transporter that may be involved in A.fumigatus adaptation to azoles such as vorizonazole. The sequence is that of Major facilitator superfamily multidrug transporter mfsB from Aspergillus fumigatus (strain ATCC MYA-4609 / CBS 101355 / FGSC A1100 / Af293) (Neosartorya fumigata).